A 96-amino-acid polypeptide reads, in one-letter code: Muconolactone Delta-isomerase 1 (96 aa).

The protein belongs to the muconolactone Delta-isomerase family. Homodecamer.

The enzyme catalyses (S)-muconolactone = (4,5-dihydro-5-oxofuran-2-yl)-acetate. Its pathway is aromatic compound metabolism; beta-ketoadipate pathway; 5-oxo-4,5-dihydro-2-furylacetate from catechol: step 3/3. The polypeptide is Muconolactone Delta-isomerase 1 (catC1) (Acinetobacter lwoffii).